A 364-amino-acid polypeptide reads, in one-letter code: 3-methyl-2-oxobutanoate hydroxymethyltransferase 1, mitochondrial (364 aa).

The transit peptide at 1–59 (MMMMMRRAFRHLARQQRRPLSHVPESAVYGGPRPQDVGAAAGAGAGAGATRRVTVTTLR) directs the protein to the mitochondrion. Asp94 and Asp133 together coordinate Mg(2+). Residues 94 to 95 (DS), Asp133, and Lys163 contribute to the 3-methyl-2-oxobutanoate site. A Mg(2+)-binding site is contributed by Glu165. Glu233 (proton acceptor) is an active-site residue.

It belongs to the PanB family. The cofactor is Mg(2+).

It is found in the mitochondrion. It carries out the reaction 3-methyl-2-oxobutanoate + (6R)-5,10-methylene-5,6,7,8-tetrahydrofolate + H2O = 2-dehydropantoate + (6S)-5,6,7,8-tetrahydrofolate. The protein operates within cofactor biosynthesis; (R)-pantothenate biosynthesis; (R)-pantoate from 3-methyl-2-oxobutanoate: step 1/2. Its function is as follows. Catalyzes the reversible reaction in which hydroxymethyl group from 5,10-methylenetetrahydrofolate is transferred onto alpha-ketoisovalerate to form ketopantoate. The chain is 3-methyl-2-oxobutanoate hydroxymethyltransferase 1, mitochondrial (KPHMT1) from Oryza sativa subsp. japonica (Rice).